Reading from the N-terminus, the 237-residue chain is tRNA-splicing endonuclease subunit Sen2-1 (237 aa).

Residues tyrosine 148, histidine 156, and lysine 190 contribute to the active site.

This sequence belongs to the tRNA-intron endonuclease family. As to quaternary structure, tRNA splicing endonuclease is a heterotetramer composed of SEN2, SEN15, SEN34/LENG5 and SEN54.

Its subcellular location is the nucleus. It catalyses the reaction pretRNA = a 3'-half-tRNA molecule with a 5'-OH end + a 5'-half-tRNA molecule with a 2',3'-cyclic phosphate end + an intron with a 2',3'-cyclic phosphate and a 5'-hydroxyl terminus.. In terms of biological role, constitutes one of the two catalytic subunit of the tRNA-splicing endonuclease complex, a complex responsible for identification and cleavage of the splice sites in pre-tRNA. It cleaves pre-tRNA at the 5'- and 3'-splice sites to release the intron. The products are an intron and two tRNA half-molecules bearing 2',3'-cyclic phosphate and 5'-OH termini. There are no conserved sequences at the splice sites, but the intron is invariably located at the same site in the gene, placing the splice sites an invariant distance from the constant structural features of the tRNA body. Probably carries the active site for 5'-splice site cleavage. The chain is tRNA-splicing endonuclease subunit Sen2-1 (SEN1) from Arabidopsis thaliana (Mouse-ear cress).